The following is a 263-amino-acid chain: 3-deoxy-manno-octulosonate cytidylyltransferase (263 aa).

Belongs to the KdsB family.

The protein resides in the cytoplasm. It catalyses the reaction 3-deoxy-alpha-D-manno-oct-2-ulosonate + CTP = CMP-3-deoxy-beta-D-manno-octulosonate + diphosphate. Its pathway is nucleotide-sugar biosynthesis; CMP-3-deoxy-D-manno-octulosonate biosynthesis; CMP-3-deoxy-D-manno-octulosonate from 3-deoxy-D-manno-octulosonate and CTP: step 1/1. It functions in the pathway bacterial outer membrane biogenesis; lipopolysaccharide biosynthesis. Functionally, activates KDO (a required 8-carbon sugar) for incorporation into bacterial lipopolysaccharide in Gram-negative bacteria. The chain is 3-deoxy-manno-octulosonate cytidylyltransferase from Burkholderia thailandensis (strain ATCC 700388 / DSM 13276 / CCUG 48851 / CIP 106301 / E264).